Consider the following 176-residue polypeptide: Nucleoside triphosphate/diphosphate phosphatase (176 aa).

Arg23 serves as the catalytic Proton donor. Positions 87, 103, 105, 107, 120, and 123 each coordinate Mg(2+).

It belongs to the Ntdp family. The cofactor is Mg(2+).

It catalyses the reaction a ribonucleoside 5'-triphosphate + H2O = a ribonucleoside 5'-diphosphate + phosphate + H(+). It carries out the reaction a ribonucleoside 5'-diphosphate + H2O = a ribonucleoside 5'-phosphate + phosphate + H(+). Its function is as follows. Has nucleoside phosphatase activity towards nucleoside triphosphates and nucleoside diphosphates. This Bacillus anthracis (strain A0248) protein is Nucleoside triphosphate/diphosphate phosphatase.